The following is a 181-amino-acid chain: Probable GTP-binding protein EngB (181 aa).

The EngB-type G domain maps to 18–181; sequence PKNEICFVGR…LQDLVNNLFN (164 aa). GTP contacts are provided by residues 26–33, 52–56, 70–73, 137–140, and 164–166; these read GRSNVGKS, GKTKL, DLPG, TKRD, and VSI. Residues serine 33 and threonine 54 each contribute to the Mg(2+) site.

It belongs to the TRAFAC class TrmE-Era-EngA-EngB-Septin-like GTPase superfamily. EngB GTPase family. Mg(2+) serves as cofactor.

Its function is as follows. Necessary for normal cell division and for the maintenance of normal septation. This is Probable GTP-binding protein EngB from Mycoplasma mobile (strain ATCC 43663 / 163K / NCTC 11711) (Mesomycoplasma mobile).